Consider the following 154-residue polypeptide: Myoglobin (154 aa).

A Globin domain is found at 1 to 147 (MADVKKNCLA…FNDECQHQLA (147 aa)). Heme b is bound at residue His96.

It belongs to the globin family.

It localises to the cytoplasm. This Nippostrongylus brasiliensis (Rat hookworm) protein is Myoglobin (GLBB).